The sequence spans 102 residues: Small ribosomal subunit protein uS10 (102 aa).

It belongs to the universal ribosomal protein uS10 family. Part of the 30S ribosomal subunit.

Its function is as follows. Involved in the binding of tRNA to the ribosomes. This chain is Small ribosomal subunit protein uS10, found in Caulobacter sp. (strain K31).